A 382-amino-acid polypeptide reads, in one-letter code: Glutaminyl-peptide cyclotransferase-like protein (382 aa).

A helical membrane pass occupies residues 35 to 55 (LLPLLLALAVGSAFYTIWSGW). The cysteines at positions 167 and 191 are disulfide-linked. A Zn(2+)-binding site is contributed by D186. The active-site Proton acceptor is the E225. Zn(2+) is bound at residue E226. D269 functions as the Proton acceptor in the catalytic mechanism. Zn(2+) is bound at residue H351.

This sequence belongs to the glutaminyl-peptide cyclotransferase family.

Its subcellular location is the golgi apparatus membrane. The catalysed reaction is N-terminal L-glutaminyl-[peptide] = N-terminal 5-oxo-L-prolyl-[peptide] + NH4(+). Functionally, responsible for the biosynthesis of pyroglutamyl peptides. This chain is Glutaminyl-peptide cyclotransferase-like protein (QPCTL), found in Macaca fascicularis (Crab-eating macaque).